A 116-amino-acid chain; its full sequence is Flagellar transcriptional regulator FlhD (116 aa).

It belongs to the FlhD family. Homodimer; disulfide-linked. Forms a heterohexamer composed of two FlhC and four FlhD subunits. Each FlhC binds a FlhD dimer, forming a heterotrimer, and a hexamer assembles by dimerization of two heterotrimers.

Its subcellular location is the cytoplasm. Its function is as follows. Functions in complex with FlhC as a master transcriptional regulator that regulates transcription of several flagellar and non-flagellar operons by binding to their promoter region. Activates expression of class 2 flagellar genes, including fliA, which is a flagellum-specific sigma factor that turns on the class 3 genes. Also regulates genes whose products function in a variety of physiological pathways. The chain is Flagellar transcriptional regulator FlhD from Salmonella arizonae (strain ATCC BAA-731 / CDC346-86 / RSK2980).